The sequence spans 68 residues: Large ribosomal subunit protein bL35 (68 aa).

Residues 29–68 form a disordered region; that stretch reads GGVSHYNTKKSSKRKRQGRKPQYVPKNLEHKVKALLPNDV. The segment covering 35–47 has biased composition (basic residues); the sequence is NTKKSSKRKRQGR.

The protein belongs to the bacterial ribosomal protein bL35 family.

The chain is Large ribosomal subunit protein bL35 from Sulfurihydrogenibium sp. (strain YO3AOP1).